The chain runs to 196 residues: SAGA-associated factor 11 homolog (196 aa).

Residues 1-22 form a disordered region; that stretch reads MSAANMPTTTGAQGSGNQVPTT. The SGF11-type zinc-finger motif lies at 106-127; that stretch reads CTCPNCDRLVAAARFAPHLEKC. Positions 144–196 are disordered; sequence TKEGATSAHLHSAGNTGGTDDEDDVDWSSDKRRKKSNQNSRNNGSKKNNGKSF. Phosphoserine is present on Ser-172. Residues 180–196 are compositionally biased toward low complexity; that stretch reads NQNSRNNGSKKNNGKSF.

The protein belongs to the SGF11 family. As to quaternary structure, component of some SAGA transcription coactivator-HAT complexes, at least composed of Ada2b, not/nonstop, Pcaf/Gcn5, Sgf11 and Spt3. Within the SAGA complex, Sgf11, e(y)2, and not/nonstop form an additional subcomplex of SAGA called the DUB module (deubiquitination module). Interacts directly with not/nonstop. Interacts with the AMEX complex component xmas-2. Interacts with Cbp80; important for promoter recruitment of Sgf11 that is not associated with the DUB module.

It is found in the nucleus. The protein localises to the nucleoplasm. It localises to the cytoplasm. Its function is as follows. Component of the transcription regulatory histone acetylation (HAT) complex SAGA, a multiprotein complex that activates transcription by remodeling chromatin and mediating histone acetylation and deubiquitination. Within the SAGA complex, participates in a subcomplex that specifically deubiquitinates histone H2B. The SAGA complex is recruited to specific gene promoters by activators, where it is required for transcription. Required for nuclear receptor-mediated transactivation. Binds independently on SAGA to promoters in an RNA-dependent manner. Binds to mRNA and is essential for total mRNA export from the nucleus. Required to counteract heterochromatin silencing. Controls the development of neuronal connectivity in visual system by being required for accurate axon targeting in the optic lobe. Required for expression of ecdysone-induced genes such as br/broad. This chain is SAGA-associated factor 11 homolog, found in Drosophila erecta (Fruit fly).